Here is a 275-residue protein sequence, read N- to C-terminus: uncharacterized protein (275 aa).

It localises to the virion. This is an uncharacterized protein from Acanthamoeba polyphaga (Amoeba).